The sequence spans 367 residues: Phosphoribosylaminoimidazole-succinocarboxamide synthase (367 aa).

It belongs to the SAICAR synthetase family.

The enzyme catalyses 5-amino-1-(5-phospho-D-ribosyl)imidazole-4-carboxylate + L-aspartate + ATP = (2S)-2-[5-amino-1-(5-phospho-beta-D-ribosyl)imidazole-4-carboxamido]succinate + ADP + phosphate + 2 H(+). Its pathway is purine metabolism; IMP biosynthesis via de novo pathway; 5-amino-1-(5-phospho-D-ribosyl)imidazole-4-carboxamide from 5-amino-1-(5-phospho-D-ribosyl)imidazole-4-carboxylate: step 1/2. This is Phosphoribosylaminoimidazole-succinocarboxamide synthase from Colwellia psychrerythraea (strain 34H / ATCC BAA-681) (Vibrio psychroerythus).